We begin with the raw amino-acid sequence, 60 residues long: MEKKFLDILVCPVTKGRLEYHQDKQELWSRQAKLAYPIKDGIPYMLENEARALGEEELKV.

It belongs to the UPF0434 family.

The chain is UPF0434 protein NMCC_0628 from Neisseria meningitidis serogroup C (strain 053442).